A 539-amino-acid polypeptide reads, in one-letter code: Glutamyl-tRNA(Gln) amidotransferase subunit B, mitochondrial (539 aa).

The protein belongs to the GatB/GatE family. GatB subfamily. As to quaternary structure, subunit of the heterotrimeric GatFAB amidotransferase (AdT) complex, composed of A, B and F subunits.

Its subcellular location is the mitochondrion. The catalysed reaction is L-glutamyl-tRNA(Gln) + L-glutamine + ATP + H2O = L-glutaminyl-tRNA(Gln) + L-glutamate + ADP + phosphate + H(+). In terms of biological role, allows the formation of correctly charged Gln-tRNA(Gln) through the transamidation of misacylated Glu-tRNA(Gln) in the mitochondria. The reaction takes place in the presence of glutamine and ATP through an activated gamma-phospho-Glu-tRNA(Gln). This chain is Glutamyl-tRNA(Gln) amidotransferase subunit B, mitochondrial, found in Kluyveromyces lactis (strain ATCC 8585 / CBS 2359 / DSM 70799 / NBRC 1267 / NRRL Y-1140 / WM37) (Yeast).